We begin with the raw amino-acid sequence, 641 residues long: Acetyl-coenzyme A synthetase (641 aa).

Residues 186–189 (RGGK) and Thr304 each bind CoA. ATP contacts are provided by residues 380–382 (GEP), 404–409 (DTWWQT), Asp493, and Arg508. Ser516 contacts CoA. Arg519 lines the ATP pocket. Mg(2+) contacts are provided by Val530, His532, and Ile535. At Lys602 the chain carries N6-acetyllysine.

It belongs to the ATP-dependent AMP-binding enzyme family. The cofactor is Mg(2+). Post-translationally, acetylated. Deacetylation by the SIR2-homolog deacetylase activates the enzyme.

The enzyme catalyses acetate + ATP + CoA = acetyl-CoA + AMP + diphosphate. Its function is as follows. Catalyzes the conversion of acetate into acetyl-CoA (AcCoA), an essential intermediate at the junction of anabolic and catabolic pathways. AcsA undergoes a two-step reaction. In the first half reaction, AcsA combines acetate with ATP to form acetyl-adenylate (AcAMP) intermediate. In the second half reaction, it can then transfer the acetyl group from AcAMP to the sulfhydryl group of CoA, forming the product AcCoA. The protein is Acetyl-coenzyme A synthetase of Gamma-proteobacterium EBAC31A08.